Here is a 154-residue protein sequence, read N- to C-terminus: MEHVPGSFGTSASFALRFGQTIFSAASLIFMCFDFDFYDFTTFCYLAMVMAIVTPWSILLALTDTYSVLVKLLPQELRVLSIVFAGDFVLSFLSLGGACAVASATELLASADGKICDGSLCIQYQVSAALAFLCWFLLLASALFNFWSLPSLYY.

The Cytoplasmic segment spans residues 1-17; it reads MEHVPGSFGTSASFALR. Residues 18–38 traverse the membrane as a helical segment; that stretch reads FGQTIFSAASLIFMCFDFDFY. Residues 39–41 lie on the Extracellular side of the membrane; that stretch reads DFT. Residues 42-62 traverse the membrane as a helical segment; that stretch reads TFCYLAMVMAIVTPWSILLAL. At 63 to 81 the chain is on the cytoplasmic side; it reads TDTYSVLVKLLPQELRVLS. The chain crosses the membrane as a helical span at residues 82-102; it reads IVFAGDFVLSFLSLGGACAVA. The Extracellular portion of the chain corresponds to 103-128; that stretch reads SATELLASADGKICDGSLCIQYQVSA. The helical transmembrane segment at 129 to 149 threads the bilayer; sequence ALAFLCWFLLLASALFNFWSL. Topologically, residues 150-154 are cytoplasmic; it reads PSLYY.

Belongs to the Casparian strip membrane proteins (CASP) family. In terms of assembly, homodimer and heterodimers.

The protein resides in the cell membrane. This Arabidopsis thaliana (Mouse-ear cress) protein is CASP-like protein 5C2.